The sequence spans 203 residues: Thymidylate kinase (203 aa).

14-21 (GGEGSGKS) lines the ATP pocket.

This sequence belongs to the thymidylate kinase family.

It catalyses the reaction dTMP + ATP = dTDP + ADP. Its function is as follows. Phosphorylation of dTMP to form dTDP in both de novo and salvage pathways of dTTP synthesis. In Rickettsia canadensis (strain McKiel), this protein is Thymidylate kinase.